Consider the following 253-residue polypeptide: 2-dehydro-3-deoxy-D-gluconate 5-dehydrogenase (253 aa).

Residue 14 to 38 (LITGCDTGLGQGMAVGLAEAGCDIV) participates in NAD(+) binding. Position 145 (Ser-145) interacts with substrate. The active-site Proton acceptor is the Tyr-158.

It belongs to the short-chain dehydrogenases/reductases (SDR) family.

The enzyme catalyses 2-dehydro-3-deoxy-D-gluconate + NAD(+) = 3-deoxy-D-glycero-2,5-hexodiulosonate + NADH + H(+). Its pathway is glycan metabolism; pectin degradation; 2-dehydro-3-deoxy-D-gluconate from pectin: step 5/5. Catalyzes the reduction of 2,5-diketo-3-deoxygluconate (DKII or 4,6-dihydroxy-2,5-dioxohexanoate) into 2-keto-3-deoxygluconate (KDG or 2-dehydro-3-deoxygluconate) with a concomitant oxidation of NADH. This Dickeya dadantii (strain 3937) (Erwinia chrysanthemi (strain 3937)) protein is 2-dehydro-3-deoxy-D-gluconate 5-dehydrogenase (kduD).